A 279-amino-acid chain; its full sequence is Putative biopolymer transport protein ExbB homolog (279 aa).

The next 3 helical transmembrane spans lie at 19 to 39 (SGGV…ITAL), 126 to 146 (IIEV…WYTF), and 162 to 182 (IYVA…LMPL).

The protein belongs to the ExbB/TolQ family.

It is found in the cell membrane. The protein is Putative biopolymer transport protein ExbB homolog of Methanothermobacter thermautotrophicus (strain ATCC 29096 / DSM 1053 / JCM 10044 / NBRC 100330 / Delta H) (Methanobacterium thermoautotrophicum).